The following is a 477-amino-acid chain: uncharacterized protein (477 aa).

Residues 107 to 129 (VNFWSLSMACASVLALLGLVYLI) form a helical membrane-spanning segment.

The protein resides in the membrane. This is an uncharacterized protein from Treponema pallidum (strain Nichols).